We begin with the raw amino-acid sequence, 241 residues long: tRNA (guanine-N(1)-)-methyltransferase (241 aa).

S-adenosyl-L-methionine contacts are provided by residues glycine 123 and 143–148; that span reads IGDYVL.

It belongs to the RNA methyltransferase TrmD family. Homodimer.

It is found in the cytoplasm. It carries out the reaction guanosine(37) in tRNA + S-adenosyl-L-methionine = N(1)-methylguanosine(37) in tRNA + S-adenosyl-L-homocysteine + H(+). Its function is as follows. Specifically methylates guanosine-37 in various tRNAs. In Roseobacter denitrificans (strain ATCC 33942 / OCh 114) (Erythrobacter sp. (strain OCh 114)), this protein is tRNA (guanine-N(1)-)-methyltransferase.